Reading from the N-terminus, the 106-residue chain is uncharacterized protein (106 aa).

The disordered stretch occupies residues 1-23; that stretch reads MASGAPPLTQKTPSHARRKERRR. Over residues 14 to 23 the composition is skewed to basic residues; that stretch reads SHARRKERRR.

This is an uncharacterized protein from Treponema pallidum (strain Nichols).